The sequence spans 136 residues: Globin-2 (136 aa).

The 134-residue stretch at 1–134 folds into the Globin domain; sequence VSQADIAAVQ…ILSQMKIALS (134 aa). A heme b-binding site is contributed by His89.

The protein belongs to the globin family. In terms of assembly, homodimer.

The sequence is that of Globin-2 from Phreagena soyoae (Deep-sea cold-seep clam).